A 513-amino-acid polypeptide reads, in one-letter code: V-type proton ATPase subunit B, kidney isoform (513 aa).

Arg-394 contacts ATP. A PDZ-binding motif is present at residues 510–513 (DTAL).

This sequence belongs to the ATPase alpha/beta chains family. V-ATPase is a heteromultimeric enzyme made up of two complexes: the ATP-hydrolytic V1 complex and the proton translocation V0 complex. The V1 complex consists of three catalytic AB heterodimers that form a heterohexamer, three peripheral stalks each consisting of EG heterodimers, one central rotor including subunits D and F, and the regulatory subunits C and H. The proton translocation complex V0 consists of the proton transport subunit a, a ring of proteolipid subunits c9c'', rotary subunit d, subunits e and f, and the accessory subunits ATP6AP1/Ac45 and ATP6AP2/PRR. Forms a complex with NHERF1 and SCL4A7. Kidney; localizes to early distal nephron, encompassing thick ascending limbs and distal convoluted tubules (at protein level). Expressed in the cochlea and endolymphatic sac.

Its subcellular location is the apical cell membrane. The protein resides in the basolateral cell membrane. Non-catalytic subunit of the V1 complex of vacuolar(H+)-ATPase (V-ATPase), a multisubunit enzyme composed of a peripheral complex (V1) that hydrolyzes ATP and a membrane integral complex (V0) that translocates protons. V-ATPase is responsible for acidifying and maintaining the pH of intracellular compartments and in some cell types, is targeted to the plasma membrane, where it is responsible for acidifying the extracellular environment. Essential for the proper assembly and activity of V-ATPase. In renal intercalated cells, mediates secretion of protons (H+) into the urine thereby ensuring correct urinary acidification. Required for optimal olfactory function by mediating the acidification of the nasal olfactory epithelium. In Homo sapiens (Human), this protein is V-type proton ATPase subunit B, kidney isoform (ATP6V1B1).